The primary structure comprises 173 residues: MPDRRSVYEYEDLLACGRGELFGPGNAQLPLPPMLMFDRIVEITETGGEFGKGVVRAELDVKPDLWFFACHFKNDPVMPGCLGLDAMWQMVGFFLGWSGGEGRGRALGLGDLKFSGQVLPTARKVVYNVDIKRVMRSKLVLGIADGWLSMDGEIIYRAKDLKVGLFKQGATPS.

Residue His-71 is part of the active site.

Belongs to the thioester dehydratase family. FabA subfamily. As to quaternary structure, homodimer.

Its subcellular location is the cytoplasm. It carries out the reaction a (3R)-hydroxyacyl-[ACP] = a (2E)-enoyl-[ACP] + H2O. The enzyme catalyses (3R)-hydroxydecanoyl-[ACP] = (2E)-decenoyl-[ACP] + H2O. It catalyses the reaction (2E)-decenoyl-[ACP] = (3Z)-decenoyl-[ACP]. It functions in the pathway lipid metabolism; fatty acid biosynthesis. Functionally, necessary for the introduction of cis unsaturation into fatty acids. Catalyzes the dehydration of (3R)-3-hydroxydecanoyl-ACP to E-(2)-decenoyl-ACP and then its isomerization to Z-(3)-decenoyl-ACP. Can catalyze the dehydratase reaction for beta-hydroxyacyl-ACPs with saturated chain lengths up to 16:0, being most active on intermediate chain length. This Bradyrhizobium sp. (strain BTAi1 / ATCC BAA-1182) protein is 3-hydroxydecanoyl-[acyl-carrier-protein] dehydratase.